Here is a 148-residue protein sequence, read N- to C-terminus: Cysteine proteinase inhibitor 5 (148 aa).

The N-terminal stretch at methionine 1–alanine 25 is a signal peptide. The short motif at glutamine 99–glycine 103 is the Secondary area of contact element.

This sequence belongs to the cystatin family. Phytocystatin subfamily.

It localises to the secreted. In terms of biological role, specific inhibitor of cysteine proteinases. Probably involved in the regulation of endogenous processes and in defense against pests and pathogens. The polypeptide is Cysteine proteinase inhibitor 5 (Oryza sativa subsp. japonica (Rice)).